A 164-amino-acid polypeptide reads, in one-letter code: C-phycoerythrin alpha chain (164 aa).

(2R,3E)-phycoerythrobilin is bound by residues cysteine 82 and cysteine 139.

Belongs to the phycobiliprotein family. In terms of assembly, heterodimer of an alpha and a beta chain. Post-translationally, contains two covalently linked bilin chromophores.

Its subcellular location is the cellular thylakoid membrane. Functionally, light-harvesting photosynthetic bile pigment-protein from the phycobiliprotein complex. The sequence is that of C-phycoerythrin alpha chain (cpeA) from Microchaete diplosiphon (Fremyella diplosiphon).